A 521-amino-acid polypeptide reads, in one-letter code: Occludin (521 aa).

The segment at 1-20 (MSVRPFESPPPYRPDEFKPN) is disordered. At 1–66 (MSVRPFESPP…KWTSPPGVIR (66 aa)) the chain is on the cytoplasmic side. Residues 60–267 (SPPGVIRILS…IIFFAVKTRR (208 aa)) enclose the MARVEL domain. A helical transmembrane segment spans residues 67–89 (ILSMLIIVMCIAIFACVASTLAW). At 90-133 (DRGYGTGLFGGSLNYPYSGFGYGGGYGGGYGGYGYGYGGYTDPR) the chain is on the extracellular side. Residues 134-158 (AAKGFLLAMAAFCFIASLVIFVTSV) traverse the membrane as a helical segment. Residues 159–168 (IRSGMSRTRR) lie on the Cytoplasmic side of the membrane. Residues 169–193 (YYLIVIIVSAILGIMVFIATIVYIM) traverse the membrane as a helical segment. The Extracellular portion of the chain corresponds to 194-241 (GVNPTAQASGSMYGSQIYMICNQFYTPGGTGLYVDQYLYHYCVVDPQE). A disulfide bond links C214 and C235. The chain crosses the membrane as a helical span at residues 242–263 (AIAIVLGFMIIVAFALIIFFAV). Residues 264–521 (KTRRKMDRYD…MVGDYDRRKP (258 aa)) are Cytoplasmic-facing. Residue S300 is modified to Phosphoserine. The interval 300 to 329 (SAGTQDMPPPPSDYAERVDSPMAYSSNGKV) is disordered. The residue at position 303 (T303) is a Phosphothreonine. S311 and S319 each carry phosphoserine. S338 bears the Phosphoserine; by PKC; in vitro mark. S358 is subject to Phosphoserine. Residues 361-405 (DFRQPRYSSNGNLETPSKRAPTKGKAGKGKRTDPDHYETDYTTGG) form a disordered region. Residues 366-375 (RYSSNGNLET) show a composition bias toward polar residues. A Phosphotyrosine modification is found at Y367. 2 positions are modified to phosphoserine: S368 and S369. A compositionally biased stretch (basic residues) spans 380 to 389 (APTKGKAGKG). The span at 390–399 (KRTDPDHYET) shows a compositional bias: basic and acidic residues. A phosphotyrosine mark is found at Y397 and Y401. A Phosphothreonine; by PKC/PRKCH modification is found at T402. T403 is subject to Phosphothreonine. S407 carries the phosphoserine modification. An OCEL domain is found at 413–521 (EDWVREYPPI…MVGDYDRRKP (109 aa)). Positions 424–488 (SDQQRQLYKR…EYNRLKQVKG (65 aa)) form a coiled coil. S489 is subject to Phosphoserine.

Belongs to the ELL/occludin family. As to quaternary structure, interacts with TJP1/ZO1. Interacts with VAPA. Interacts with CLDN1, CLDN6, CLDN9, CLDN11, CLDN12 and CLDN17. Interacts with PLSCR1. Interacts with LSR, ILDR1 and ILDR2. Interacts with TJP2/ZO2. Post-translationally, dephosphorylated by PTPRJ. May be phosphorylated by PKC during translocation to cell-cell contacts. As to expression, localized at tight junctions of both epithelial and endothelial cells. Highly expressed in the testis, kidney, lung, liver and brain. Not detected in skeletal muscle, spleen and heart.

The protein resides in the cell membrane. It localises to the cell junction. The protein localises to the tight junction. In terms of biological role, may play a role in the formation and regulation of the tight junction (TJ) paracellular permeability barrier. The polypeptide is Occludin (Ocln) (Mus musculus (Mouse)).